Consider the following 200-residue polypeptide: Type 1 fimbriae regulatory protein FimB (200 aa).

The region spanning 8–189 (KKRNFLTHSE…NAGRFYGIWD (182 aa)) is the Tyr recombinase domain. Residues Arg-47, Lys-72, His-141, Arg-144, and His-167 contribute to the active site. Residue Tyr-176 is the O-(3'-phospho-DNA)-tyrosine intermediate of the active site.

It belongs to the 'phage' integrase family.

Functionally, fimB is one of the 2 regulatory proteins which control the phase variation of type 1 fimbriae in E.coli. These proteins mediate the periodic inversion of a 300bp DNA segment that harbors the promoter for the fimbrial structural gene, fimA. FimB switches fimA on. The polypeptide is Type 1 fimbriae regulatory protein FimB (fimB) (Escherichia coli O157:H7).